A 542-amino-acid chain; its full sequence is Sensor protein CitS (542 aa).

Residues 1–13 (MVKKRFHFSLQTK) are Cytoplasmic-facing. The helical transmembrane segment at 14–34 (IMGLIAALLVFVIGVLTITLA) threads the bilayer. At 35–175 (VQHTQGERRQ…TEQSIKKHLR (141 aa)) the chain is on the extracellular side. Residues 176-196 (NLSVIAVLVLLLGFIGAAVLA) traverse the membrane as a helical segment. Over 197–542 (KSIRKDTLGL…PFDSHRDCGG (346 aa)) the chain is Cytoplasmic. Residues 216–279 (RERNAMLFAI…MSVLEKGEML (64 aa)) form the PAS domain. The 193-residue stretch at 336–528 (AQTHEFSNKL…VFTVFIPKEK (193 aa)) folds into the Histidine kinase domain. The residue at position 339 (His-339) is a Phosphohistidine; by autocatalysis.

The protein resides in the cell membrane. The enzyme catalyses ATP + protein L-histidine = ADP + protein N-phospho-L-histidine.. Member of the two-component regulatory system CitT/CitS. Regulates the expression of the citM-yflN operon. Functions probably as a membrane-associated protein kinase that phosphorylates CitT in response to environmental citrate or Mg(2+)-citrate complex. This Bacillus subtilis (strain 168) protein is Sensor protein CitS (citS).